The following is a 231-amino-acid chain: Elongation factor 1-delta 1 (231 aa).

Ala2 bears the N-acetylalanine mark. The GST C-terminal domain maps to 10–73 (DAGLKKLDEH…LRISGVSAEG (64 aa)). 2 disordered regions span residues 85–108 (TEEAVATPPAADSKDAAADEEDDD) and 116–135 (ETEEEKKAAEERAASVKAST). Residues 119–129 (EEKKAAEERAA) show a composition bias toward basic and acidic residues.

This sequence belongs to the EF-1-beta/EF-1-delta family. EF-1 is composed of 4 subunits: alpha, beta (1B-alpha=beta'), delta (1B-beta), and gamma (1B-gamma).

In terms of biological role, EF-1-beta and EF-1-delta stimulate the exchange of GDP bound to EF-1-alpha to GTP. The polypeptide is Elongation factor 1-delta 1 (Arabidopsis thaliana (Mouse-ear cress)).